The sequence spans 474 residues: Type I restriction enzyme EcoBI specificity subunit (474 aa).

The protein belongs to the type-I restriction system S methylase family. In terms of assembly, the type I restriction/modification system is composed of three polypeptides R, M and S. The restriction enzyme has stoichiometry R(2)M(2)S(1) while the methyltransferase is M(2)S(1).

Its function is as follows. The specificity (S) subunit of a type I restriction enzyme; this subunit dictates DNA sequence specificity. The M and S subunits together form a methyltransferase (MTase) that methylates A-3 on the top strand and A-4 on the bottom strand of the sequence 5'-TGAN(8)TGCT-3'. In the presence of the R subunit the complex can also act as an endonuclease, binding to the same target sequence but cutting the DNA some distance from this site. Whether the DNA is cut or modified depends on the methylation state of the target sequence. When the target site is unmodified, the DNA is cut. When the target site is hemimethylated, the complex acts as a maintenance MTase modifying the DNA so that both strands become methylated. After locating a non-methylated recognition site, the enzyme complex serves as a molecular motor that translocates DNA in an ATP-dependent manner until a collision occurs that triggers cleavage. This is Type I restriction enzyme EcoBI specificity subunit from Escherichia coli.